Here is a 129-residue protein sequence, read N- to C-terminus: Small ribosomal subunit protein uS11 (129 aa).

It belongs to the universal ribosomal protein uS11 family. As to quaternary structure, part of the 30S ribosomal subunit. Interacts with proteins S7 and S18. Binds to IF-3.

In terms of biological role, located on the platform of the 30S subunit, it bridges several disparate RNA helices of the 16S rRNA. Forms part of the Shine-Dalgarno cleft in the 70S ribosome. The sequence is that of Small ribosomal subunit protein uS11 from Paracoccus denitrificans (strain Pd 1222).